The sequence spans 324 residues: THUMP domain-containing protein 1 homolog (324 aa).

Disordered stretches follow at residues 1-24 (MEPA…KKYF) and 67-104 (SEKP…DDDD). Basic and acidic residues predominate over residues 68-80 (EKPENEPEKKQPE). The residue at position 99 (T99) is a Phosphothreonine. S100 carries the phosphoserine modification. A THUMP domain is found at 154–260 (DIATTGKSMS…RGWCLLSVID (107 aa)). A disordered region spans residues 275-324 (NPSDKKSSGEGDSKSETSEVANGNDKEQAESSEESKSNDDENKDSTENDK). Composition is skewed to basic and acidic residues over residues 277 to 291 (SDKK…KSET) and 298 to 324 (NDKE…ENDK).

This sequence belongs to the THUMPD1 family.

This is THUMP domain-containing protein 1 homolog from Drosophila melanogaster (Fruit fly).